A 185-amino-acid chain; its full sequence is MQKTNPGLQRLFQIPTFTLSNSDLTCEMKVKIADTARYSLKQNPNQDKAEVIERCRIAVYAEFFVADWLSGYVNKGQEDVDDPYTYAWDVLAHPKYCGLRVEVKTHQTDSRWISVTTGCSGEYPYGSGINLGPILNHQVADCIIIFNTKEIHPGVIQYTPKFIGDREDLRKVVRKSNYNGWYLSI.

It catalyses the reaction Endonucleolytic cleavage of the 5' phosphodiester bond of deoxycytidine in single-stranded DNA.. Cleaves single-stranded DNA in a dC-specific manner. The cleavage occurs exclusively at the 5'-proximal position (dC1) within a dCs tract having a minimal size of 6 bases. These specific cleavages may have a detrimental effect on the replication of host dC-containing DNA. This is Endonuclease IV (denB) from Enterobacteria phage T4 (Bacteriophage T4).